We begin with the raw amino-acid sequence, 660 residues long: 1-deoxy-D-xylulose-5-phosphate synthase (660 aa).

Thiamine diphosphate contacts are provided by residues H86 and A127–S129. Mg(2+) is bound at residue D164. Thiamine diphosphate is bound by residues G165–S166, N196, Y306, and E388. N196 contributes to the Mg(2+) binding site.

Belongs to the transketolase family. DXPS subfamily. In terms of assembly, homodimer. The cofactor is Mg(2+). Thiamine diphosphate serves as cofactor.

It catalyses the reaction D-glyceraldehyde 3-phosphate + pyruvate + H(+) = 1-deoxy-D-xylulose 5-phosphate + CO2. Its pathway is metabolic intermediate biosynthesis; 1-deoxy-D-xylulose 5-phosphate biosynthesis; 1-deoxy-D-xylulose 5-phosphate from D-glyceraldehyde 3-phosphate and pyruvate: step 1/1. Functionally, catalyzes the acyloin condensation reaction between C atoms 2 and 3 of pyruvate and glyceraldehyde 3-phosphate to yield 1-deoxy-D-xylulose-5-phosphate (DXP). This is 1-deoxy-D-xylulose-5-phosphate synthase from Gluconobacter oxydans (strain 621H) (Gluconobacter suboxydans).